Consider the following 444-residue polypeptide: MSGTKLEDSPPCRNWSSASELNETQEPFLNPTDYDDEEFLRYLWREYLHPKEYEWVLIAGYIIVFVVALIGNVLVCVAVWKNHHMRTVTNYFIVNLSLADVLVTITCLPATLVVDITETWFFGQSLCKVIPYLQTVSVSVSVLTLSCIALDRWYAICHPLMFKSTAKRARNSIVIIWIVSCIIMIPQAIVMECSTVFPGLANKTTLFTVCDERWGGEIYPKMYHICFFLVTYMAPLCLMVLAYLQIFRKLWCRQIPGTSSVVQRKWKPLQPVSQPRGPGQPTKSRMSAVAAEIKQIRARRKTARMLMIVLLVFAICYLPISILNVLKRVFGMFAHTEDRETVYAWFTFSHWLVYANSAANPIIYNFLSGKFREEFKAAFSCCCLGVHHRQEDRLTRGRTSTESRKSLTTQISNFDNISKLSEQVVLTSISTLPAANGAGPLQNW.

Basic and acidic residues predominate over residues 1 to 10 (MSGTKLEDSP). Residues 1 to 20 (MSGTKLEDSPPCRNWSSASE) are disordered. Residues 1-54 (MSGTKLEDSPPCRNWSSASELNETQEPFLNPTDYDDEEFLRYLWREYLHPKEYE) are Extracellular-facing. N-linked (GlcNAc...) asparagine glycosylation is found at N14 and N22. The interval 33 to 49 (DYDDEEFLRYLWREYLH) is required for response to orexin-A. Residues 55–75 (WVLIAGYIIVFVVALIGNVLV) traverse the membrane as a helical segment. At 76 to 88 (CVAVWKNHHMRTV) the chain is on the cytoplasmic side. A helical membrane pass occupies residues 89 to 110 (TNYFIVNLSLADVLVTITCLPA). At 111–127 (TLVVDITETWFFGQSLC) the chain is on the extracellular side. The cysteines at positions 127 and 210 are disulfide-linked. Residues 128–150 (KVIPYLQTVSVSVSVLTLSCIAL) traverse the membrane as a helical segment. Topologically, residues 151 to 170 (DRWYAICHPLMFKSTAKRAR) are cytoplasmic. The helical transmembrane segment at 171 to 191 (NSIVIIWIVSCIIMIPQAIVM) threads the bilayer. Residues 192–222 (ECSTVFPGLANKTTLFTVCDERWGGEIYPKM) lie on the Extracellular side of the membrane. Residue N202 is glycosylated (N-linked (GlcNAc...) asparagine). Residues 223 to 243 (YHICFFLVTYMAPLCLMVLAY) form a helical membrane-spanning segment. At 244–304 (LQIFRKLWCR…QIRARRKTAR (61 aa)) the chain is on the cytoplasmic side. The helical transmembrane segment at 305–326 (MLMIVLLVFAICYLPISILNVL) threads the bilayer. N324 lines the suvorexant pocket. Topologically, residues 327–342 (KRVFGMFAHTEDRETV) are extracellular. Residues 343–366 (YAWFTFSHWLVYANSAANPIIYNF) traverse the membrane as a helical segment. The Cytoplasmic segment spans residues 367–444 (LSGKFREEFK…ANGAGPLQNW (78 aa)).

The protein belongs to the G-protein coupled receptor 1 family.

Its subcellular location is the cell membrane. Its function is as follows. Nonselective, high-affinity receptor for both orexin-A and orexin-B neuropeptides. Triggers an increase in cytoplasmic Ca(2+) levels in response to orexin-A binding. This chain is Orexin receptor type 2 (HCRTR2), found in Homo sapiens (Human).